Consider the following 571-residue polypeptide: ATP-dependent RNA helicase RhlB (571 aa).

The Q motif signature appears at 9–37; sequence VTFSSFDLHPALIAGLESAGFTRCTPIQA. In terms of domain architecture, Helicase ATP-binding spans 40 to 220; sequence LPVALPGGDV…YEHMNEPEKL (181 aa). 53-60 provides a ligand contact to ATP; it reads AQTGTGKT. The DEAD box signature appears at 166–169; the sequence is DEAD. The Helicase C-terminal domain occupies 231–393; sequence RVRQRIYFPS…PVTSELLTPL (163 aa). Positions 391-558 are disordered; the sequence is TPLPRAPRVP…KPSGSPSLLS (168 aa). Over residues 402-411 the composition is skewed to acidic residues; sequence EGEEADDDAG. Over residues 419-432 the composition is skewed to basic and acidic residues; the sequence is REAREQRAAEEQRR. The span at 435-448 shows a compositional bias: gly residues; that stretch reads GRGGPGGSRSGSGG. Residues 449–460 show a composition bias toward basic and acidic residues; sequence GRRDGAGADGKP. Over residues 483–497 the composition is skewed to low complexity; it reads VVAAVAAQAPSAGVA. A compositionally biased stretch (basic residues) spans 503 to 512; the sequence is PRKRRRRRNG. Low complexity predominate over residues 539–558; sequence VVAKPVRAAAKPSGSPSLLS.

This sequence belongs to the DEAD box helicase family. RhlB subfamily. Component of the RNA degradosome, which is a multiprotein complex involved in RNA processing and mRNA degradation.

It is found in the cytoplasm. The enzyme catalyses ATP + H2O = ADP + phosphate + H(+). Its function is as follows. DEAD-box RNA helicase involved in RNA degradation. Has RNA-dependent ATPase activity and unwinds double-stranded RNA. This Xanthomonas axonopodis pv. citri (strain 306) protein is ATP-dependent RNA helicase RhlB.